Here is a 20-residue protein sequence, read N- to C-terminus: Peptide encoded by miPEP171b (20 aa).

As to expression, lateral root initiations.

Regulatory peptide encoded by the primary transcript (pri-miR171b) of the microRNA miR171b that enhances the accumulation of its corresponding mature miRNA. Acts probably as a transcriptional activator of its corresponding pri-miRNA. Has no effect on the accumulation of other miRNAs. Addition of synthetic miPEP171b increases the abundance of miR171b, with consequent reduction of lateral root formation. The chain is Peptide encoded by miPEP171b from Medicago truncatula (Barrel medic).